Here is a 100-residue protein sequence, read N- to C-terminus: NADH-quinone oxidoreductase subunit K (100 aa).

Transmembrane regions (helical) follow at residues 4 to 24 (TSYY…GVLL), 29 to 49 (IVVF…LVAF), and 60 to 80 (VIVF…LALL).

It belongs to the complex I subunit 4L family. As to quaternary structure, NDH-1 is composed of 14 different subunits. Subunits NuoA, H, J, K, L, M, N constitute the membrane sector of the complex.

Its subcellular location is the cell membrane. The enzyme catalyses a quinone + NADH + 5 H(+)(in) = a quinol + NAD(+) + 4 H(+)(out). Its function is as follows. NDH-1 shuttles electrons from NADH, via FMN and iron-sulfur (Fe-S) centers, to quinones in the respiratory chain. The immediate electron acceptor for the enzyme in this species is believed to be ubiquinone. Couples the redox reaction to proton translocation (for every two electrons transferred, four hydrogen ions are translocated across the cytoplasmic membrane), and thus conserves the redox energy in a proton gradient. The protein is NADH-quinone oxidoreductase subunit K of Chloroflexus aurantiacus (strain ATCC 29366 / DSM 635 / J-10-fl).